We begin with the raw amino-acid sequence, 396 residues long: Gap junction gamma-1 protein (396 aa).

At Met1 to Lys22 the chain is on the cytoplasmic side. A helical transmembrane segment spans residues Ile23–Tyr45. At Asp46–Arg75 the chain is on the extracellular side. A helical membrane pass occupies residues Phe76–Ala95. Over Ile96 to Lys175 the chain is Cytoplasmic. The interval Glu145–Arg165 is disordered. A compositionally biased stretch (basic and acidic residues) spans Glu147–Asn156. The helical transmembrane segment at Ile176–Leu198 threads the bilayer. Residues Tyr199–Lys228 lie on the Extracellular side of the membrane. The chain crosses the membrane as a helical span at residues Thr229 to Trp248. The Cytoplasmic portion of the chain corresponds to Glu249 to Ile396. Positions Ala355–Ile396 are disordered. The segment covering Gly373–Ile396 has biased composition (low complexity).

It belongs to the connexin family. Gamma-type subfamily. In terms of assembly, a connexon is composed of a hexamer of connexins. Interacts with CNST.

Its subcellular location is the cell membrane. The protein resides in the cell junction. It is found in the gap junction. In terms of biological role, one gap junction consists of a cluster of closely packed pairs of transmembrane channels, the connexons, through which materials of low MW diffuse from one cell to a neighboring cell. The polypeptide is Gap junction gamma-1 protein (GJC1) (Canis lupus familiaris (Dog)).